A 229-amino-acid polypeptide reads, in one-letter code: 2,3-bisphosphoglycerate-dependent phosphoglycerate mutase (229 aa).

Substrate-binding positions include 7-14, 20-21, Arg59, 86-89, Lys97, 113-114, and 182-183; these read RHGQSEWN, TG, ERHY, RR, and GN. His8 serves as the catalytic Tele-phosphohistidine intermediate. Glu86 functions as the Proton donor/acceptor in the catalytic mechanism.

Belongs to the phosphoglycerate mutase family. BPG-dependent PGAM subfamily.

It catalyses the reaction (2R)-2-phosphoglycerate = (2R)-3-phosphoglycerate. The protein operates within carbohydrate degradation; glycolysis; pyruvate from D-glyceraldehyde 3-phosphate: step 3/5. Its function is as follows. Catalyzes the interconversion of 2-phosphoglycerate and 3-phosphoglycerate. This Listeria monocytogenes serotype 4b (strain F2365) protein is 2,3-bisphosphoglycerate-dependent phosphoglycerate mutase.